The following is a 778-amino-acid chain: uncharacterized protein (778 aa).

The region spanning 1 to 92 is the PE domain; it reads MSFVIAVPEA…GARSYVVAEA (92 aa). Disordered stretches follow at residues 125-163, 372-510, and 718-778; these read ADGT…AGLI, TGLA…GDAF, and QGGL…GADG. 3 stretches are compositionally biased toward gly residues: residues 402–429, 436–510, and 718–763; these read NQTG…GGLG, DGTG…GDAF, and QGGL…GSSG.

It belongs to the mycobacterial PE family. PGRS subfamily.

This is an uncharacterized protein from Mycobacterium bovis (strain ATCC BAA-935 / AF2122/97).